The primary structure comprises 889 residues: Alanine--tRNA ligase (889 aa).

Zn(2+) contacts are provided by His569, His573, Cys671, and His675.

This sequence belongs to the class-II aminoacyl-tRNA synthetase family. Zn(2+) is required as a cofactor.

The protein resides in the cytoplasm. It catalyses the reaction tRNA(Ala) + L-alanine + ATP = L-alanyl-tRNA(Ala) + AMP + diphosphate. Its function is as follows. Catalyzes the attachment of alanine to tRNA(Ala) in a two-step reaction: alanine is first activated by ATP to form Ala-AMP and then transferred to the acceptor end of tRNA(Ala). Also edits incorrectly charged Ser-tRNA(Ala) and Gly-tRNA(Ala) via its editing domain. The protein is Alanine--tRNA ligase of Parasynechococcus marenigrum (strain WH8102).